We begin with the raw amino-acid sequence, 229 residues long: Ribosome maturation factor RimM (229 aa).

A disordered region spans residues 1 to 21; that stretch reads MAGHDSGNAKRGRSPSFGVFV. Residues 148-229 enclose the PRC barrel domain; sequence ADEFYWVDLI…RVVVDWEADY (82 aa).

The protein belongs to the RimM family. In terms of assembly, binds ribosomal protein uS19.

It localises to the cytoplasm. Its function is as follows. An accessory protein needed during the final step in the assembly of 30S ribosomal subunit, possibly for assembly of the head region. Essential for efficient processing of 16S rRNA. May be needed both before and after RbfA during the maturation of 16S rRNA. It has affinity for free ribosomal 30S subunits but not for 70S ribosomes. In Burkholderia mallei (strain NCTC 10247), this protein is Ribosome maturation factor RimM.